A 345-amino-acid polypeptide reads, in one-letter code: Adenine deaminase (345 aa).

Histidine 20, histidine 22, and histidine 204 together coordinate Zn(2+). The active-site Proton donor is glutamate 207. Aspartate 285 lines the Zn(2+) pocket. Substrate is bound at residue aspartate 286.

The protein belongs to the metallo-dependent hydrolases superfamily. Adenosine and AMP deaminases family. Adenine deaminase type 2 subfamily. The cofactor is Zn(2+).

The enzyme catalyses adenine + H2O + H(+) = hypoxanthine + NH4(+). Functionally, catalyzes the hydrolytic deamination of adenine to hypoxanthine. Plays an important role in the purine salvage pathway and in nitrogen catabolism. The polypeptide is Adenine deaminase (Ralstonia pickettii (strain 12J)).